The following is a 246-amino-acid chain: B-cell receptor-associated protein 31 (246 aa).

Over 2–6 (SLQWT) the chain is Lumenal. Residues 7–27 (AVATFLYAEVFVVLLLCIPFI) form a helical membrane-spanning segment. At 28–43 (SPKRWQKIFKSRLVEL) the chain is on the cytoplasmic side. The helical transmembrane segment at 44-64 (LVSYGNTFFVVLIVILVLLVI) threads the bilayer. The Lumenal portion of the chain corresponds to 65-102 (DAVREIRKYDDVTEKVNLQNNPGAMEHFHMKLFRAQRN). The helical transmembrane segment at 103-123 (LYIAGFSLLLSFLLRRLVTLI) threads the bilayer. Residues 124–246 (SQQATLLASN…VDGPMDKKEE (123 aa)) lie on the Cytoplasmic side of the membrane. A coiled-coil region spans residues 165–237 (GGKLDVGNAE…EEHAKLQAAV (73 aa)). Positions 243-246 (KKEE) match the Di-lysine motif motif.

The protein belongs to the BCAP29/BCAP31 family. As to quaternary structure, homodimer and heterodimer with BCAP29. Binds CASP8 (isoform 9) as a complex containing BCAP31, BCAP29, BCL2 and/or BCL2L1. Forms a complex (via C-terminus) with TOMM40 which mediates the translocation of components of the mitochondrial membrane respiratory chain NADH dehydrogenase (Complex I) from the cytosol to the mitochondria; within the complex BCAP31 interacts directly with unprocessed and processed NDUFS4 and NDUFB11. Interacts with VDAC1. Interacts with VAMP3, VAMP1 and membrane IgD immunoglobulins. Interacts with HACD2. Interacts with DNM1L; may form part of a larger protein complex at the endoplasmic reticulum-mitochondrial interface during mitochondrial fission. In terms of assembly, (Microbial infection) Interacts (via C-terminus) with HRSV membrane protein SH; this interaction is direct. Post-translationally, cleaved by CASP8 and other caspases. Ubiquitous. Highly expressed in neurons and discrete endocrine cells.

The protein localises to the endoplasmic reticulum membrane. The protein resides in the endoplasmic reticulum-Golgi intermediate compartment membrane. Functions as a chaperone protein. Is one of the most abundant endoplasmic reticulum (ER) proteins. Plays a role in the export of secreted proteins in the ER, the recognition of abnormally folded protein and their targeting to the ER associated-degradation (ERAD). Also serves as a cargo receptor for the export of transmembrane proteins. Plays a role in the assembly of the mitochondrial membrane respiratory chain NADH dehydrogenase (Complex I) by stimulating the translocation of NDUFS4 and NDUFB11 from the cytosol to the mitochondria via interaction with TOMM40. In response to ER stress, delocalizes from the ER-mitochondria contact sites and binds BCL2. May be involved in CASP8-mediated apoptosis. The protein is B-cell receptor-associated protein 31 of Homo sapiens (Human).